The following is a 403-amino-acid chain: Phosphoglycerate kinase (403 aa).

Substrate-binding positions include 24-26 (DLN), Arg-39, 62-65 (HLGR), Arg-121, and Arg-161. ATP contacts are provided by residues Lys-211, Gly-299, Glu-330, and 359–362 (GGDS).

It belongs to the phosphoglycerate kinase family. Monomer.

It is found in the cytoplasm. It carries out the reaction (2R)-3-phosphoglycerate + ATP = (2R)-3-phospho-glyceroyl phosphate + ADP. It functions in the pathway carbohydrate degradation; glycolysis; pyruvate from D-glyceraldehyde 3-phosphate: step 2/5. The polypeptide is Phosphoglycerate kinase (Rhodococcus erythropolis (strain PR4 / NBRC 100887)).